Reading from the N-terminus, the 166-residue chain is Regulatory protein RecX (166 aa).

It belongs to the RecX family.

It is found in the cytoplasm. Its function is as follows. Modulates RecA activity. This is Regulatory protein RecX from Shigella dysenteriae serotype 1 (strain Sd197).